The chain runs to 204 residues: Ribosome maturation factor RimP (204 aa).

A disordered region spans residues 176–204 (GNFDESQFDEIEESEGEEADEAEQPPTKH). A compositionally biased stretch (acidic residues) spans 181–198 (SQFDEIEESEGEEADEAE).

Belongs to the RimP family.

The protein localises to the cytoplasm. Its function is as follows. Required for maturation of 30S ribosomal subunits. This Cereibacter sphaeroides (strain KD131 / KCTC 12085) (Rhodobacter sphaeroides) protein is Ribosome maturation factor RimP.